The following is a 688-amino-acid chain: Elongation factor G (688 aa).

Residues 8 to 282 (KNFRNFGIMA…AVVDFLPSPV (275 aa)) enclose the tr-type G domain. GTP contacts are provided by residues 17 to 24 (AHIDAGKT), 81 to 85 (DTPGH), and 135 to 138 (NKMD).

Belongs to the TRAFAC class translation factor GTPase superfamily. Classic translation factor GTPase family. EF-G/EF-2 subfamily.

It is found in the cytoplasm. Catalyzes the GTP-dependent ribosomal translocation step during translation elongation. During this step, the ribosome changes from the pre-translocational (PRE) to the post-translocational (POST) state as the newly formed A-site-bound peptidyl-tRNA and P-site-bound deacylated tRNA move to the P and E sites, respectively. Catalyzes the coordinated movement of the two tRNA molecules, the mRNA and conformational changes in the ribosome. The polypeptide is Elongation factor G (fusA) (Mycoplasma genitalium (strain ATCC 33530 / DSM 19775 / NCTC 10195 / G37) (Mycoplasmoides genitalium)).